The chain runs to 213 residues: Thiamine-phosphate synthase (213 aa).

Residues 41–45 (QFRVK) and Asn73 contribute to the 4-amino-2-methyl-5-(diphosphooxymethyl)pyrimidine site. Mg(2+)-binding residues include Asp74 and Asp93. 4-amino-2-methyl-5-(diphosphooxymethyl)pyrimidine is bound at residue Thr112. 139–141 (SAT) lines the 2-[(2R,5Z)-2-carboxy-4-methylthiazol-5(2H)-ylidene]ethyl phosphate pocket. Lys142 contacts 4-amino-2-methyl-5-(diphosphooxymethyl)pyrimidine. Gly171 serves as a coordination point for 2-[(2R,5Z)-2-carboxy-4-methylthiazol-5(2H)-ylidene]ethyl phosphate.

The protein belongs to the thiamine-phosphate synthase family. Mg(2+) serves as cofactor.

It catalyses the reaction 2-[(2R,5Z)-2-carboxy-4-methylthiazol-5(2H)-ylidene]ethyl phosphate + 4-amino-2-methyl-5-(diphosphooxymethyl)pyrimidine + 2 H(+) = thiamine phosphate + CO2 + diphosphate. It carries out the reaction 2-(2-carboxy-4-methylthiazol-5-yl)ethyl phosphate + 4-amino-2-methyl-5-(diphosphooxymethyl)pyrimidine + 2 H(+) = thiamine phosphate + CO2 + diphosphate. The catalysed reaction is 4-methyl-5-(2-phosphooxyethyl)-thiazole + 4-amino-2-methyl-5-(diphosphooxymethyl)pyrimidine + H(+) = thiamine phosphate + diphosphate. Its pathway is cofactor biosynthesis; thiamine diphosphate biosynthesis; thiamine phosphate from 4-amino-2-methyl-5-diphosphomethylpyrimidine and 4-methyl-5-(2-phosphoethyl)-thiazole: step 1/1. In terms of biological role, condenses 4-methyl-5-(beta-hydroxyethyl)thiazole monophosphate (THZ-P) and 2-methyl-4-amino-5-hydroxymethyl pyrimidine pyrophosphate (HMP-PP) to form thiamine monophosphate (TMP). In Erythrobacter litoralis (strain HTCC2594), this protein is Thiamine-phosphate synthase.